Here is an 833-residue protein sequence, read N- to C-terminus: Leucine--tRNA ligase (833 aa).

Residues 41-52 carry the 'HIGH' region motif; sequence PYPSGAGLHVGH. A 'KMSKS' region motif is present at residues 610 to 614; that stretch reads KMSKS. Lysine 613 serves as a coordination point for ATP.

Belongs to the class-I aminoacyl-tRNA synthetase family.

It localises to the cytoplasm. It carries out the reaction tRNA(Leu) + L-leucine + ATP = L-leucyl-tRNA(Leu) + AMP + diphosphate. In Streptococcus equi subsp. equi (strain 4047), this protein is Leucine--tRNA ligase.